The following is a 285-amino-acid chain: Iodotyrosine deiodinase 1 (285 aa).

The helical transmembrane segment at 1–21 (MFLLTPVLVAVVCILVVWVFK) threads the bilayer. Residues 96–100 (RRSVR) and 124–125 (SG) each bind FMN. 3,5-diiodo-L-tyrosine contacts are provided by Ala-126, Glu-153, Tyr-157, and Lys-178. The 3-iodo-L-tyrosine site is built by Ala-126, Glu-153, Tyr-157, and Lys-178. Residues 233-235 (TTT) and Arg-275 each bind FMN.

This sequence belongs to the nitroreductase family. Homodimer. FMN serves as cofactor.

It is found in the cell membrane. The protein resides in the cytoplasmic vesicle membrane. It carries out the reaction 2 iodide + L-tyrosine + 2 NADP(+) = 3,5-diiodo-L-tyrosine + 2 NADPH + H(+). The catalysed reaction is iodide + L-tyrosine + NADP(+) = 3-iodo-L-tyrosine + NADPH. It catalyses the reaction 3-iodo-L-tyrosine + iodide + NADP(+) = 3,5-diiodo-L-tyrosine + NADPH + H(+). The enzyme catalyses L-tyrosine + chloride + NADP(+) = 3-chloro-L-tyrosine + NADPH. It carries out the reaction bromide + L-tyrosine + NADP(+) = 3-bromo-L-tyrosine + NADPH. Functionally, catalyzes the dehalogenation of halotyrosines such as 3-bromo-L-tyrosine, 3-chloro-L-tyrosine, 3-iodo-L-tyrosine and 3,5-diiodo-L-tyrosine. During thyroid hormone biosynthesis, facilitates iodide salvage by catalysing the oxidative NADPH-dependent deiodination of the halogenated by-products of thyroid hormone production, monoiodotyrosine (L-MIT) and diiodotyrosine (L-DIT). The scavanged iodide can then reenter the hormone-producing pathways. Acts more efficiently on 3-iodo-L-tyrosine than 3,5-diiodo-L-tyrosine. The chain is Iodotyrosine deiodinase 1 (Iyd) from Mus musculus (Mouse).